We begin with the raw amino-acid sequence, 161 residues long: Crossover junction endodeoxyribonuclease RuvC (161 aa).

Residues Asp9, Glu72, and Asp144 contribute to the active site. Asp9, Glu72, and Asp144 together coordinate Mg(2+).

The protein belongs to the RuvC family. In terms of assembly, homodimer which binds Holliday junction (HJ) DNA. The HJ becomes 2-fold symmetrical on binding to RuvC with unstacked arms; it has a different conformation from HJ DNA in complex with RuvA. In the full resolvosome a probable DNA-RuvA(4)-RuvB(12)-RuvC(2) complex forms which resolves the HJ. Requires Mg(2+) as cofactor.

Its subcellular location is the cytoplasm. It catalyses the reaction Endonucleolytic cleavage at a junction such as a reciprocal single-stranded crossover between two homologous DNA duplexes (Holliday junction).. Functionally, the RuvA-RuvB-RuvC complex processes Holliday junction (HJ) DNA during genetic recombination and DNA repair. Endonuclease that resolves HJ intermediates. Cleaves cruciform DNA by making single-stranded nicks across the HJ at symmetrical positions within the homologous arms, yielding a 5'-phosphate and a 3'-hydroxyl group; requires a central core of homology in the junction. The consensus cleavage sequence is 5'-(A/T)TT(C/G)-3'. Cleavage occurs on the 3'-side of the TT dinucleotide at the point of strand exchange. HJ branch migration catalyzed by RuvA-RuvB allows RuvC to scan DNA until it finds its consensus sequence, where it cleaves and resolves the cruciform DNA. The chain is Crossover junction endodeoxyribonuclease RuvC from Synechococcus sp. (strain ATCC 27144 / PCC 6301 / SAUG 1402/1) (Anacystis nidulans).